We begin with the raw amino-acid sequence, 712 residues long: Polyribonucleotide nucleotidyltransferase (712 aa).

Positions 487 and 493 each coordinate Mg(2+). In terms of domain architecture, KH spans 554–613; the sequence is PKIITMTINPDKIRDVIGPSGKQINKIIEETGVKIDIEQDGTVFISSINQEMNDKAKKII. One can recognise an S1 motif domain in the interval 623–691; sequence GEIYEGKVKR…KQGRVNLSRK (69 aa).

It belongs to the polyribonucleotide nucleotidyltransferase family. Mg(2+) is required as a cofactor.

The protein resides in the cytoplasm. It catalyses the reaction RNA(n+1) + phosphate = RNA(n) + a ribonucleoside 5'-diphosphate. Functionally, involved in mRNA degradation. Catalyzes the phosphorolysis of single-stranded polyribonucleotides processively in the 3'- to 5'-direction. This Bacillus anthracis (strain CDC 684 / NRRL 3495) protein is Polyribonucleotide nucleotidyltransferase.